Reading from the N-terminus, the 318-residue chain is uncharacterized protein (318 aa).

To A.aeolicus AA07 and AA34.

This is an uncharacterized protein from Aquifex aeolicus (strain VF5).